A 431-amino-acid chain; its full sequence is Ribosomal protein uS12 methylthiotransferase RimO (431 aa).

An MTTase N-terminal domain is found at 4 to 120 (HKLFLLSLGC…ILAALGAAYH (117 aa)). [4Fe-4S] cluster-binding residues include C13, C49, C83, C144, C148, and C151. Residues 130-359 (LTPPHYTYLK…MELQESVSQD (230 aa)) form the Radical SAM core domain. Residues 362–429 (RDFEGKEITV…PFDLVGEVIG (68 aa)) form the TRAM domain.

It belongs to the methylthiotransferase family. RimO subfamily. [4Fe-4S] cluster is required as a cofactor.

The protein resides in the cytoplasm. The enzyme catalyses L-aspartate(89)-[ribosomal protein uS12]-hydrogen + (sulfur carrier)-SH + AH2 + 2 S-adenosyl-L-methionine = 3-methylsulfanyl-L-aspartate(89)-[ribosomal protein uS12]-hydrogen + (sulfur carrier)-H + 5'-deoxyadenosine + L-methionine + A + S-adenosyl-L-homocysteine + 2 H(+). Catalyzes the methylthiolation of an aspartic acid residue of ribosomal protein uS12. The chain is Ribosomal protein uS12 methylthiotransferase RimO from Pelodictyon phaeoclathratiforme (strain DSM 5477 / BU-1).